Here is a 231-residue protein sequence, read N- to C-terminus: Large ribosomal subunit protein uL1 (231 aa).

This sequence belongs to the universal ribosomal protein uL1 family. As to quaternary structure, part of the 50S ribosomal subunit.

Binds directly to 23S rRNA. The L1 stalk is quite mobile in the ribosome, and is involved in E site tRNA release. In terms of biological role, protein L1 is also a translational repressor protein, it controls the translation of the L11 operon by binding to its mRNA. The chain is Large ribosomal subunit protein uL1 from Acetivibrio thermocellus (strain ATCC 27405 / DSM 1237 / JCM 9322 / NBRC 103400 / NCIMB 10682 / NRRL B-4536 / VPI 7372) (Clostridium thermocellum).